A 401-amino-acid chain; its full sequence is Palmitoyltransferase PFA3 (401 aa).

The Cytoplasmic segment spans residues 1-20; it reads MQCRKCCFACEKWCFIGAKA. The helical transmembrane segment at 21–41 threads the bilayer; it reads FLPLVVNFLIIWACWVHAWLV. Residues 42–56 lie on the Lumenal side of the membrane; the sequence is CWEPQLFESDTTFWR. Residues 57–77 form a helical membrane-spanning segment; it reads VYGVAGVAIGIMCNVLYLKVC. Residues 78-171 lie on the Cytoplasmic side of the membrane; sequence KVGPGSPTDI…TAIGFHNHKY (94 aa). The DHHC domain occupies 127 to 177; that stretch reads RFCTKCIGWKPDRSHHCSNYKRCVLKFDHYCPWFATAIGFHNHKYFVLFLW. Catalysis depends on cysteine 157, which acts as the S-palmitoyl cysteine intermediate. A helical transmembrane segment spans residues 172–192; sequence FVLFLWYVTILCFFCLGSTGF. Topologically, residues 193–220 are lumenal; sequence VFYNHILEIGAMRGPDGNTDYVGAISVN. The helical transmembrane segment at 221–241 threads the bilayer; it reads VMILMVLALVFAIAVGTFATF. Over 242-401 the chain is Cytoplasmic; that stretch reads SLYLVFNNQS…INMVNKNNTK (160 aa). Positions 351–367 are enriched in low complexity; sequence QQRQQQQKRTQYDLPQH. Residues 351-401 are disordered; it reads QQRQQQQKRTQYDLPQHLQPPPQEHYEYDDEAQDSGDDIPLINMVNKNNTK. Over residues 377 to 387 the composition is skewed to acidic residues; it reads EYDDEAQDSGD.

The protein belongs to the DHHC palmitoyltransferase family. PFA3 subfamily.

It localises to the vacuole membrane. It carries out the reaction L-cysteinyl-[protein] + hexadecanoyl-CoA = S-hexadecanoyl-L-cysteinyl-[protein] + CoA. Palmitoyltransferase specific for VAC8. Palmitoylates VAC8 at one or more of its N-terminal cysteine residues, which is required for its proper membrane localization. This chain is Palmitoyltransferase PFA3 (PFA3), found in Yarrowia lipolytica (strain CLIB 122 / E 150) (Yeast).